The sequence spans 356 residues: Protein-glutamate methylesterase/protein-glutamine glutaminase 2 (356 aa).

Residues 6 to 123 (KVLIVDDSAL…KQFLEESSIR (118 aa)) form the Response regulatory domain. 4-aspartylphosphate is present on aspartate 57. The CheB-type methylesterase domain maps to 165-356 (VQRTEKVVVV…AAAIVKACNS (192 aa)). Residues serine 177, histidine 203, and aspartate 299 contribute to the active site.

Belongs to the CheB family. Post-translationally, phosphorylated by CheA. Phosphorylation of the N-terminal regulatory domain activates the methylesterase activity.

Its subcellular location is the cytoplasm. It carries out the reaction [protein]-L-glutamate 5-O-methyl ester + H2O = L-glutamyl-[protein] + methanol + H(+). The catalysed reaction is L-glutaminyl-[protein] + H2O = L-glutamyl-[protein] + NH4(+). Involved in chemotaxis. Part of a chemotaxis signal transduction system that modulates chemotaxis in response to various stimuli. Catalyzes the demethylation of specific methylglutamate residues introduced into the chemoreceptors (methyl-accepting chemotaxis proteins or MCP) by CheR. Also mediates the irreversible deamidation of specific glutamine residues to glutamic acid. The polypeptide is Protein-glutamate methylesterase/protein-glutamine glutaminase 2 (Oleidesulfovibrio alaskensis (strain ATCC BAA-1058 / DSM 17464 / G20) (Desulfovibrio alaskensis)).